The chain runs to 310 residues: tRNA dimethylallyltransferase (310 aa).

19 to 26 (GPTGTGKS) is an ATP binding site. 21–26 (TGTGKS) lines the substrate pocket.

The protein belongs to the IPP transferase family. Monomer. The cofactor is Mg(2+).

The catalysed reaction is adenosine(37) in tRNA + dimethylallyl diphosphate = N(6)-dimethylallyladenosine(37) in tRNA + diphosphate. Its function is as follows. Catalyzes the transfer of a dimethylallyl group onto the adenine at position 37 in tRNAs that read codons beginning with uridine, leading to the formation of N6-(dimethylallyl)adenosine (i(6)A). This Saccharopolyspora erythraea (strain ATCC 11635 / DSM 40517 / JCM 4748 / NBRC 13426 / NCIMB 8594 / NRRL 2338) protein is tRNA dimethylallyltransferase.